The primary structure comprises 33 residues: Brevinin-2LT (33 aa).

A disulfide bond links C27 and C33.

Expressed by the skin glands.

It localises to the secreted. Has antibacterial activity. The polypeptide is Brevinin-2LT (Rana latastei (Italian agile frog)).